An 847-amino-acid chain; its full sequence is Leucine--tRNA ligase (847 aa).

The 'HIGH' region signature appears at 41 to 51; the sequence is PYPSGRIHMGH. The 'KMSKS' region motif lies at 619 to 623; it reads KMSKS. Lys-622 lines the ATP pocket.

It belongs to the class-I aminoacyl-tRNA synthetase family.

Its subcellular location is the cytoplasm. It catalyses the reaction tRNA(Leu) + L-leucine + ATP = L-leucyl-tRNA(Leu) + AMP + diphosphate. This chain is Leucine--tRNA ligase, found in Cereibacter sphaeroides (strain ATCC 17023 / DSM 158 / JCM 6121 / CCUG 31486 / LMG 2827 / NBRC 12203 / NCIMB 8253 / ATH 2.4.1.) (Rhodobacter sphaeroides).